Here is a 379-residue protein sequence, read N- to C-terminus: Leukocyte elastase inhibitor (379 aa).

Met1 is subject to N-acetylmethionine. N6-acetyllysine is present on residues Lys137 and Lys177. A Phosphoserine modification is found at Ser300. The segment at Asn351–Pro379 is CARD-binding motif (CBM).

It belongs to the serpin family. Ov-serpin subfamily. In terms of assembly, monomer. Interacts (via C-terminus) with CASP1; CASP4 (via CARD domain) and CASP5; these interactions regulate the activity of inflammatory caspases. Interacts with PRTN3. Interacts with GZMH. In human bone marrow, present in all CD45+ populations. Expression levels are highest in the neutrophil lineage, intermediate in monocytic, and lowest in lymphocytic lineage. Within the neutrophil lineage, expression is highest in promyelocytes.

Its subcellular location is the secreted. The protein localises to the cytoplasm. It is found in the cytolytic granule. The protein resides in the early endosome. Its function is as follows. Neutrophil serine protease inhibitor that plays an essential role in the regulation of the innate immune response, inflammation and cellular homeostasis. Acts primarily to protect the cell from proteases released in the cytoplasm during stress or infection. These proteases are important in killing microbes but when released from granules, these potent enzymes also destroy host proteins and contribute to mortality. Regulates the activity of the neutrophil proteases elastase, cathepsin G, proteinase-3, chymase, chymotrypsin, and kallikrein-3. Also acts as a potent intracellular inhibitor of GZMH by directly blocking its proteolytic activity. During inflammation, limits the activity of inflammatory caspases CASP1, CASP4 and CASP5 by suppressing their caspase-recruitment domain (CARD) oligomerization and enzymatic activation. When secreted, promotes the proliferation of beta-cells via its protease inhibitory function. This chain is Leukocyte elastase inhibitor (SERPINB1), found in Homo sapiens (Human).